A 294-amino-acid polypeptide reads, in one-letter code: 33 kDa chaperonin (294 aa).

Disulfide bonds link Cys-236–Cys-238 and Cys-269–Cys-272.

This sequence belongs to the HSP33 family. Post-translationally, under oxidizing conditions two disulfide bonds are formed involving the reactive cysteines. Under reducing conditions zinc is bound to the reactive cysteines and the protein is inactive.

The protein localises to the cytoplasm. Its function is as follows. Redox regulated molecular chaperone. Protects both thermally unfolding and oxidatively damaged proteins from irreversible aggregation. Plays an important role in the bacterial defense system toward oxidative stress. The polypeptide is 33 kDa chaperonin (Desulfotalea psychrophila (strain LSv54 / DSM 12343)).